Consider the following 660-residue polypeptide: WD repeat-containing protein 48 homolog (660 aa).

WD repeat units lie at residues 23–78 (MHRS…RDLH), 84–120 (HHTD…CMST), 123–162 (THRD…KLTA), 174–213 (GNKD…KLMK), 216–255 (GHTD…CISS), 258–297 (CHSE…TAQL), 300–341 (IEDA…ISVE), and 362–401 (PGAA…KVCD).

Belongs to the WD repeat WDR48 family.

Functionally, regulator of deubiquitinating complexes. Activates deubiquitination by increasing the catalytic turnover without increasing the affinity of deubiquitinating enzymes for the substrate. The chain is WD repeat-containing protein 48 homolog from Brugia malayi (Filarial nematode worm).